Here is a 95-residue protein sequence, read N- to C-terminus: UPF0235 protein MS0322 (95 aa).

This sequence belongs to the UPF0235 family.

This Mannheimia succiniciproducens (strain KCTC 0769BP / MBEL55E) protein is UPF0235 protein MS0322.